We begin with the raw amino-acid sequence, 154 residues long: UPF0260 protein HI_1355 (154 aa).

This sequence belongs to the UPF0260 family.

The chain is UPF0260 protein HI_1355 from Haemophilus influenzae (strain ATCC 51907 / DSM 11121 / KW20 / Rd).